The sequence spans 423 residues: Probable sodium/metabolite cotransporter BASS3, chloroplastic (423 aa).

The N-terminal 45 residues, 1 to 45 (MAAAVAASSSSSSSSCAAVGVATASHPHRHRQARFVVSPPAPASP), are a transit peptide targeting the chloroplast. Transmembrane regions (helical) follow at residues 106-126 (ALLPLVVAATAVAALGNPATF), 138-158 (LGGIMLSIGIKLSIDDFALAF), 165-187 (TIGYMAQYIVKPLMGVLIARAFG), 192-214 (FFAGFVLTCCVSGAQLSSYASFL), 231-251 (ISSVVVTPVLTGLLIGSVVPV), 254-274 (IAMAKSILQVVLVPVTLGLLL), 287-307 (PVMPFVAMLCTSLCIGSPLAI), 318-338 (FLLLLPIVTFHIAAFIVGYWI), and 380-400 (VPAACSVVIMAIFGLTLASYW).

It belongs to the bile acid:sodium symporter (BASS) (TC 2.A.28) family.

It is found in the membrane. Its subcellular location is the plastid. It localises to the chloroplast envelope. May function as sodium-coupled metabolite transporter across the chloroplast envelope. In Oryza sativa subsp. japonica (Rice), this protein is Probable sodium/metabolite cotransporter BASS3, chloroplastic (BASS3).